We begin with the raw amino-acid sequence, 184 residues long: Large ribosomal subunit protein uL15 (184 aa).

The segment at 1 to 55 (MDLSSLSPAKGSVKNKKRVGRGQGSGNGTTAGKGNKGQQSRSGYKRPVSEGGQMP) is disordered. Positions 21–35 (RGQGSGNGTTAGKGN) are enriched in gly residues.

This sequence belongs to the universal ribosomal protein uL15 family. In terms of assembly, part of the 50S ribosomal subunit.

In terms of biological role, binds to the 23S rRNA. This chain is Large ribosomal subunit protein uL15, found in Prosthecochloris aestuarii (strain DSM 271 / SK 413).